The chain runs to 173 residues: Alpha-crystallin A chain (173 aa).

M1 carries the post-translational modification N-acetylmethionine. In terms of domain architecture, sHSP spans 52–164; that stretch reads LFRSVLESGI…SDRPIPVARE (113 aa). Zn(2+)-binding residues include H100, E102, H107, and H154. The tract at residues 152 to 173 is disordered; it reads TIHSDRPIPVAREEKPTSAPSS. Residues 153–167 show a composition bias toward basic and acidic residues; it reads IHSDRPIPVAREEKP.

It belongs to the small heat shock protein (HSP20) family. As to quaternary structure, heteropolymer composed of three CRYAA and one CRYAB subunits. Inter-subunit bridging via zinc ions enhances stability, which is crucial as there is no protein turn over in the lens. Can also form homodimers and homotetramers (dimers of dimers) which serve as the building blocks of homooligomers. Within homooligomers, the zinc-binding motif is created from residues of 3 different molecules. His-100 and Glu-102 from one molecule are ligands of the zinc ion, and His-107 and His-154 residues from additional molecules complete the site with tetrahedral coordination geometry.

It localises to the cytoplasm. The protein resides in the nucleus. In terms of biological role, contributes to the transparency and refractive index of the lens. May act as a chaperone, preventing aggregation of various proteins under a wide range of stress conditions. The chain is Alpha-crystallin A chain (CRYAA) from Alligator mississippiensis (American alligator).